Consider the following 1016-residue polypeptide: Vacuolar membrane protease (1016 aa).

Residues Met-1 to Ser-36 are disordered. Residues Met-1–Lys-57 lie on the Cytoplasmic side of the membrane. A helical transmembrane segment spans residues Thr-58–Ser-78. Over Asn-79–Leu-408 the chain is Vacuolar. N-linked (GlcNAc...) asparagine glycans are attached at residues Asn-147 and Asn-177. His-191 and Asp-203 together coordinate Zn(2+). Catalysis depends on Glu-238, which acts as the Proton acceptor. Positions 239, 264, and 337 each coordinate Zn(2+). A helical transmembrane segment spans residues Ile-409–Phe-429. Residues Asn-430–Gly-438 are Cytoplasmic-facing. Residues Phe-439–Ile-459 traverse the membrane as a helical segment. Over Thr-460–Ser-481 the chain is Vacuolar. An N-linked (GlcNAc...) asparagine glycan is attached at Asn-473. The helical transmembrane segment at Thr-482–Phe-502 threads the bilayer. Topologically, residues Lys-503–Asp-511 are cytoplasmic. Residues Glu-512–Thr-532 traverse the membrane as a helical segment. Topologically, residues Asn-533 to Glu-547 are vacuolar. Residues Phe-548 to Trp-568 form a helical membrane-spanning segment. Residues Ser-569 to Tyr-646 are Cytoplasmic-facing. Residues Tyr-598–Ser-622 form a disordered region. Positions Ser-612–Ser-622 are enriched in low complexity. Residues Val-647–Gly-667 form a helical membrane-spanning segment. The Vacuolar segment spans residues Leu-668 to Leu-681. The N-linked (GlcNAc...) asparagine glycan is linked to Asn-669. A helical transmembrane segment spans residues Ile-682–Phe-702. Topologically, residues Lys-703–Arg-706 are cytoplasmic. Residues Leu-707–Ser-727 traverse the membrane as a helical segment. Residues Pro-728–Ile-1016 lie on the Vacuolar side of the membrane. Residues Asn-778, Asn-821, Asn-850, Asn-875, and Asn-977 are each glycosylated (N-linked (GlcNAc...) asparagine).

This sequence belongs to the peptidase M28 family. Zn(2+) serves as cofactor.

The protein localises to the vacuole membrane. Functionally, may be involved in vacuolar sorting and osmoregulation. The protein is Vacuolar membrane protease of Debaryomyces hansenii (strain ATCC 36239 / CBS 767 / BCRC 21394 / JCM 1990 / NBRC 0083 / IGC 2968) (Yeast).